A 42-amino-acid polypeptide reads, in one-letter code: Photosystem I reaction center subunit IX (42 aa).

Residues 8-28 (YLSTAPVLLTIWLSFTAALVI) form a helical membrane-spanning segment.

This sequence belongs to the PsaJ family.

The protein localises to the plastid. It localises to the chloroplast thylakoid membrane. Its function is as follows. May help in the organization of the PsaE and PsaF subunits. The polypeptide is Photosystem I reaction center subunit IX (Guillardia theta (Cryptophyte)).